The sequence spans 425 residues: Trigger factor (425 aa).

In terms of domain architecture, PPIase FKBP-type spans 158–231 (GDLVRVNMEV…VEEVYKRTLP (74 aa)).

This sequence belongs to the FKBP-type PPIase family. Tig subfamily.

It localises to the cytoplasm. The enzyme catalyses [protein]-peptidylproline (omega=180) = [protein]-peptidylproline (omega=0). In terms of biological role, involved in protein export. Acts as a chaperone by maintaining the newly synthesized protein in an open conformation. Functions as a peptidyl-prolyl cis-trans isomerase. This Thermotoga maritima (strain ATCC 43589 / DSM 3109 / JCM 10099 / NBRC 100826 / MSB8) protein is Trigger factor (tig).